Consider the following 29-residue polypeptide: Glucagon (29 aa).

Ser2 carries the post-translational modification Phosphoserine.

The protein belongs to the glucagon family.

The protein localises to the secreted. In terms of biological role, glucagon plays a key role in glucose metabolism and homeostasis. Regulates blood glucose by increasing gluconeogenesis and decreasing glycolysis. In Oryctolagus cuniculus (Rabbit), this protein is Glucagon (GCG).